A 271-amino-acid polypeptide reads, in one-letter code: Co-chaperone protein DjlA (271 aa).

The Periplasmic portion of the chain corresponds to 1–6 (MQYWGK). A helical membrane pass occupies residues 7–31 (IIGVAVALIMGGGFWGVVLGLLIGH). Residues 32 to 271 (MFDKARSRKM…ELIKQQKGFK (240 aa)) are Cytoplasmic-facing. The 67-residue stretch at 205-271 (DACNVLGVKP…ELIKQQKGFK (67 aa)) folds into the J domain.

As to quaternary structure, homodimer.

It is found in the cell inner membrane. Its function is as follows. Regulatory DnaK co-chaperone. Direct interaction between DnaK and DjlA is needed for the induction of the wcaABCDE operon, involved in the synthesis of a colanic acid polysaccharide capsule, possibly through activation of the RcsB/RcsC phosphotransfer signaling pathway. The colanic acid capsule may help the bacterium survive conditions outside the host. The polypeptide is Co-chaperone protein DjlA (Escherichia coli O6:H1 (strain CFT073 / ATCC 700928 / UPEC)).